The chain runs to 230 residues: Ribonuclease 3 (230 aa).

One can recognise an RNase III domain in the interval 5–125 (YSRFYNILGY…VIGAIYLDSD (121 aa)). Glutamate 40 is a Mg(2+) binding site. Aspartate 44 is a catalytic residue. Mg(2+)-binding residues include aspartate 111 and glutamate 114. Residue glutamate 114 is part of the active site. Residues 153–223 (DSKSKLQEIL…AEKMIEMLSQ (71 aa)) form the DRBM domain.

It belongs to the ribonuclease III family. As to quaternary structure, homodimer. Requires Mg(2+) as cofactor.

It localises to the cytoplasm. The enzyme catalyses Endonucleolytic cleavage to 5'-phosphomonoester.. Functionally, digests double-stranded RNA. Involved in the processing of primary rRNA transcript to yield the immediate precursors to the large and small rRNAs (23S and 16S). Processes some mRNAs, and tRNAs when they are encoded in the rRNA operon. Processes pre-crRNA and tracrRNA of type II CRISPR loci if present in the organism. The protein is Ribonuclease 3 of Francisella tularensis subsp. holarctica (strain LVS).